A 798-amino-acid chain; its full sequence is Penicillin-binding protein 1A (798 aa).

Over 2 to 9 the chain is Cytoplasmic; the sequence is IKKILTTC. A helical; Signal-anchor for type II membrane protein membrane pass occupies residues 10 to 30; the sequence is FGLFFGFCVFGVGLVAIAILV. Residues 31–798 are Periplasmic-facing; it reads TYPKLPSLDS…SKQQQLDSLF (768 aa). A transglycosylase region spans residues 50 to 218; sequence LTIYSADGEV…SAYNPIVNPE (169 aa). E88 functions as the Proton donor; for transglycosylase activity in the catalytic mechanism. The transpeptidase stretch occupies residues 378–700; that stretch reads RRALGFAARA…GTIAVPVWVD (323 aa). The active-site Acyl-ester intermediate; for transpeptidase activity is S461. Residues 739-798 form a disordered region; the sequence is LMLDNSGIAPQPSRRAKEDDEAAVENEQQGRSDETRQDVQETPVLPSNTDSKQQQLDSLF. Positions 766–777 are enriched in basic and acidic residues; sequence QQGRSDETRQDV. Positions 783–798 are enriched in polar residues; that stretch reads LPSNTDSKQQQLDSLF.

It in the N-terminal section; belongs to the glycosyltransferase 51 family. The protein in the C-terminal section; belongs to the transpeptidase family.

The protein resides in the cell inner membrane. It catalyses the reaction [GlcNAc-(1-&gt;4)-Mur2Ac(oyl-L-Ala-gamma-D-Glu-L-Lys-D-Ala-D-Ala)](n)-di-trans,octa-cis-undecaprenyl diphosphate + beta-D-GlcNAc-(1-&gt;4)-Mur2Ac(oyl-L-Ala-gamma-D-Glu-L-Lys-D-Ala-D-Ala)-di-trans,octa-cis-undecaprenyl diphosphate = [GlcNAc-(1-&gt;4)-Mur2Ac(oyl-L-Ala-gamma-D-Glu-L-Lys-D-Ala-D-Ala)](n+1)-di-trans,octa-cis-undecaprenyl diphosphate + di-trans,octa-cis-undecaprenyl diphosphate + H(+). It carries out the reaction Preferential cleavage: (Ac)2-L-Lys-D-Ala-|-D-Ala. Also transpeptidation of peptidyl-alanyl moieties that are N-acyl substituents of D-alanine.. It participates in cell wall biogenesis; peptidoglycan biosynthesis. Functionally, cell wall formation. Synthesis of cross-linked peptidoglycan from the lipid intermediates. The enzyme has a penicillin-insensitive transglycosylase N-terminal domain (formation of linear glycan strands) and a penicillin-sensitive transpeptidase C-terminal domain (cross-linking of the peptide subunits). Essential for cell wall synthesis. The chain is Penicillin-binding protein 1A (mrcA) from Neisseria gonorrhoeae (strain ATCC 700825 / FA 1090).